A 698-amino-acid chain; its full sequence is Pheromone-regulated protein PRM7 (698 aa).

4 disordered regions span residues 1 to 65 (MYRT…IGNS), 133 to 183 (ESTT…SAVT), 197 to 274 (SVDQ…TVTI), and 455 to 480 (SASS…DSKT). Low complexity-rich tracts occupy residues 9–56 (EVTT…TTSA) and 158–183 (VTTS…SAVT). Positions 455–465 (SASSSRSSATS) are enriched in low complexity.

The chain is Pheromone-regulated protein PRM7 (PRM7) from Saccharomyces cerevisiae (strain ATCC 204508 / S288c) (Baker's yeast).